The primary structure comprises 137 residues: Large ribosomal subunit protein uL16 (137 aa).

The segment at 1-22 (MLQPKRTKFRKQQKGRNRGLAH) is disordered.

It belongs to the universal ribosomal protein uL16 family. In terms of assembly, part of the 50S ribosomal subunit.

Its function is as follows. Binds 23S rRNA and is also seen to make contacts with the A and possibly P site tRNAs. The protein is Large ribosomal subunit protein uL16 of Saccharophagus degradans (strain 2-40 / ATCC 43961 / DSM 17024).